Here is a 400-residue protein sequence, read N- to C-terminus: Peroxisome biogenesis factor 16 (400 aa).

The disordered stretch occupies residues 176–226 (QKQFQNKRPAVTMSINNNNNINNNDNNNINNNNNTNDDNFNNNNNNNNNRR). Residues 190–224 (INNNNNINNNDNNNINNNNNTNDDNFNNNNNNNNN) are compositionally biased toward low complexity.

The protein belongs to the peroxin-16 family.

Its subcellular location is the cytoplasm. Functionally, required for peroxisome membrane biogenesis. This Dictyostelium discoideum (Social amoeba) protein is Peroxisome biogenesis factor 16 (pex16).